Consider the following 998-residue polypeptide: Sensor histidine kinase AruS (998 aa).

3 disordered regions span residues 27 to 82 (ERRP…HARA), 154 to 198 (RQAG…LPAG), and 224 to 245 (RQHP…RQPR). Over residues 40-49 (GEAAVRRAGL) the composition is skewed to low complexity. The segment covering 161–183 (HRLHRPRTTHRHAVRRAPGRRRE) has biased composition (basic residues). 2 helical membrane passes run 264–284 (VLLF…FFEY) and 395–415 (ASLL…SWLF). Residues 417–473 (SLVTRHLWRMSEFAGHIAEGDLQQPLRLDKVDRERDEIDAVAAALEDMRQALRTDRR) enclose the HAMP domain. One can recognise a Histidine kinase domain in the interval 513 to 734 (TMSHEIRTPL…TFWFEIELAL (222 aa)). Phosphohistidine; by autocatalysis is present on H516. The 119-residue stretch at 751-869 (EVLLVEDVAL…ELRRALGEVG (119 aa)) folds into the Response regulatory domain. D800 carries the post-translational modification 4-aspartylphosphate. Residues 894–987 (GRHKLAGLLG…RDGAEALRRA (94 aa)) form the HPt domain. Residue H933 is modified to Phosphohistidine.

Post-translationally, autophosphorylated. Activation may require a sequential transfer of a phosphate group from a His in the primary transmitter domain, to an Asp in the receiver domain and to a His in the secondary transmitter domain.

It is found in the cell membrane. It catalyses the reaction ATP + protein L-histidine = ADP + protein N-phospho-L-histidine.. It functions in the pathway amino-acid degradation; L-arginine degradation [regulation]. Functionally, member of the two-component regulatory system AruS/AruR, which is involved in the regulation of the arginine transaminase (ATA) pathway in response to exogeneous L-arginine. Probably functions as a sensor kinase that phosphorylates AruR. This chain is Sensor histidine kinase AruS (aruS), found in Pseudomonas aeruginosa (strain ATCC 15692 / DSM 22644 / CIP 104116 / JCM 14847 / LMG 12228 / 1C / PRS 101 / PAO1).